The chain runs to 289 residues: F-actin-capping protein subunit beta (289 aa).

The tract at residues 73–110 (RSPWSNQFDPPLEGGNQGGSGGDGEGDGGEGGAAGSIM) is disordered. Residues 87-106 (GNQGGSGGDGEGDGGEGGAA) are compositionally biased toward gly residues.

Belongs to the F-actin-capping protein beta subunit family. In terms of assembly, component of the F-actin capping complex, composed of a heterodimer of an alpha and a beta subunit.

The protein resides in the cytoplasm. It localises to the cytoskeleton. Its subcellular location is the actin patch. In terms of biological role, F-actin-capping proteins bind in a Ca(2+)-independent manner to the fast growing ends of actin filaments (barbed end) thereby blocking the exchange of subunits at these ends. Unlike other capping proteins (such as gelsolin and severin), these proteins do not sever actin filaments. The sequence is that of F-actin-capping protein subunit beta (fac-2) from Neurospora crassa (strain ATCC 24698 / 74-OR23-1A / CBS 708.71 / DSM 1257 / FGSC 987).